A 182-amino-acid chain; its full sequence is Peptidoglycan L,D-endopeptidase MepK (182 aa).

The tat-type signal signal peptide spans 1–30 (MDKFDANRRKLLALGGVALGAAILPTPAFA). The Zn(2+) site is built by His-133, Asp-140, and His-173.

Belongs to the peptidase M15 family. Zn(2+) serves as cofactor. Predicted to be exported by the Tat system. The position of the signal peptide cleavage has not been experimentally proven.

Its pathway is cell wall biogenesis; cell wall polysaccharide biosynthesis. L,D-endopeptidase that cleaves meso-diaminopimelic acid (mDAP)-mDAP cross-links in peptidoglycan. It works in conjunction with other elongation-specific D,D-endopeptidases to make space for efficient incorporation of nascent peptidoglycan strands into the sacculus and thus enable cell wall expansion. The polypeptide is Peptidoglycan L,D-endopeptidase MepK (Escherichia coli O157:H7).